The primary structure comprises 391 residues: Elongation factor Tu 2 (391 aa).

The region spanning 10 to 201 (KPHVNIGTIG…EVDRYIPTPE (192 aa)) is the tr-type G domain. Residues 19–26 (GHVDHGKT) are G1. A GTP-binding site is contributed by 19 to 26 (GHVDHGKT). Thr26 provides a ligand contact to Mg(2+). Residues 55 to 59 (GITIS) are G2. The G3 stretch occupies residues 76 to 79 (DCPG). GTP-binding positions include 76–80 (DCPGH) and 131–134 (NKVD). Residues 131 to 134 (NKVD) are G4. The G5 stretch occupies residues 169–171 (SAL).

This sequence belongs to the TRAFAC class translation factor GTPase superfamily. Classic translation factor GTPase family. EF-Tu/EF-1A subfamily. As to quaternary structure, monomer.

Its subcellular location is the cytoplasm. The catalysed reaction is GTP + H2O = GDP + phosphate + H(+). Its function is as follows. GTP hydrolase that promotes the GTP-dependent binding of aminoacyl-tRNA to the A-site of ribosomes during protein biosynthesis. The polypeptide is Elongation factor Tu 2 (Bartonella bacilliformis (strain ATCC 35685 / KC583 / Herrer 020/F12,63)).